The sequence spans 893 residues: Alanine--tRNA ligase (893 aa).

It belongs to the class-II aminoacyl-tRNA synthetase family.

It localises to the cytoplasm. The enzyme catalyses tRNA(Ala) + L-alanine + ATP = L-alanyl-tRNA(Ala) + AMP + diphosphate. Its function is as follows. Catalyzes the attachment of alanine to tRNA(Ala) in a two-step reaction: alanine is first activated by ATP to form Ala-AMP and then transferred to the acceptor end of tRNA(Ala). Also edits incorrectly charged Ser-tRNA(Ala) and Gly-tRNA(Ala) via its editing domain. This Leuconostoc mesenteroides subsp. mesenteroides (strain ATCC 8293 / DSM 20343 / BCRC 11652 / CCM 1803 / JCM 6124 / NCDO 523 / NBRC 100496 / NCIMB 8023 / NCTC 12954 / NRRL B-1118 / 37Y) protein is Alanine--tRNA ligase (alaS).